Reading from the N-terminus, the 320-residue chain is Ferrochelatase (320 aa).

2 residues coordinate Fe cation: H194 and E275.

The protein belongs to the ferrochelatase family. In terms of assembly, monomer.

The protein localises to the cytoplasm. The catalysed reaction is heme b + 2 H(+) = protoporphyrin IX + Fe(2+). It participates in porphyrin-containing compound metabolism; protoheme biosynthesis; protoheme from protoporphyrin-IX: step 1/1. Its function is as follows. Catalyzes the ferrous insertion into protoporphyrin IX. This Shigella boydii serotype 4 (strain Sb227) protein is Ferrochelatase.